Here is a 590-residue protein sequence, read N- to C-terminus: ATP-dependent lipid A-core flippase (590 aa).

Helical transmembrane passes span 31-51 (IFIA…VIPK), 74-94 (AILT…GYLL), 132-152 (AVIF…ITLV), 159-179 (VALL…VSVI), 259-279 (VTAF…MIQA), and 286-306 (IGGF…LKHL). In terms of domain architecture, ABC transmembrane type-1 spans 33–315 (IAAILAMAVV…LTDINQPLTR (283 aa)). Residues 347–585 (LVFERVGFRY…NGLYAGLHRI (239 aa)) form the ABC transporter domain. 381 to 388 (GPSGSGKT) contacts ATP.

Belongs to the ABC transporter superfamily. Lipid exporter (TC 3.A.1.106) family. Homodimer.

Its subcellular location is the cell inner membrane. It carries out the reaction ATP + H2O + lipid A-core oligosaccharideSide 1 = ADP + phosphate + lipid A-core oligosaccharideSide 2.. Involved in lipopolysaccharide (LPS) biosynthesis. Translocates lipid A-core from the inner to the outer leaflet of the inner membrane. Transmembrane domains (TMD) form a pore in the inner membrane and the ATP-binding domain (NBD) is responsible for energy generation. The protein is ATP-dependent lipid A-core flippase of Cupriavidus pinatubonensis (strain JMP 134 / LMG 1197) (Cupriavidus necator (strain JMP 134)).